Here is a 180-residue protein sequence, read N- to C-terminus: Large ribosomal subunit protein uL5c (180 aa).

Belongs to the universal ribosomal protein uL5 family. As to quaternary structure, part of the 50S ribosomal subunit; contacts the 5S rRNA.

The protein localises to the plastid. It localises to the chloroplast. Binds 5S rRNA, forms part of the central protuberance of the 50S subunit. The chain is Large ribosomal subunit protein uL5c (rpl5) from Chlorella vulgaris (Green alga).